Consider the following 145-residue polypeptide: 3-hydroxyacyl-[acyl-carrier-protein] dehydratase FabZ (145 aa).

Residue His47 is part of the active site.

The protein belongs to the thioester dehydratase family. FabZ subfamily.

It is found in the cytoplasm. It catalyses the reaction a (3R)-hydroxyacyl-[ACP] = a (2E)-enoyl-[ACP] + H2O. Its function is as follows. Involved in unsaturated fatty acids biosynthesis. Catalyzes the dehydration of short chain beta-hydroxyacyl-ACPs and long chain saturated and unsaturated beta-hydroxyacyl-ACPs. This is 3-hydroxyacyl-[acyl-carrier-protein] dehydratase FabZ from Vesicomyosocius okutanii subsp. Calyptogena okutanii (strain HA).